Here is a 344-residue protein sequence, read N- to C-terminus: Sulfate/thiosulfate import ATP-binding protein CysA (344 aa).

Residues 3–233 form the ABC transporter domain; that stretch reads ILIDNVSKNF…PESAFVMSFL (231 aa). Residue 35 to 42 participates in ATP binding; that stretch reads GPSGCGKS.

This sequence belongs to the ABC transporter superfamily. Sulfate/tungstate importer (TC 3.A.1.6) family. The complex is composed of two ATP-binding proteins (CysA), two transmembrane proteins (CysT and CysW) and a solute-binding protein (CysP).

The protein resides in the cell inner membrane. It carries out the reaction sulfate(out) + ATP + H2O = sulfate(in) + ADP + phosphate + H(+). The catalysed reaction is thiosulfate(out) + ATP + H2O = thiosulfate(in) + ADP + phosphate + H(+). In terms of biological role, part of the ABC transporter complex CysAWTP involved in sulfate/thiosulfate import. Responsible for energy coupling to the transport system. This is Sulfate/thiosulfate import ATP-binding protein CysA from Gloeobacter violaceus (strain ATCC 29082 / PCC 7421).